The chain runs to 344 residues: 3-isopropylmalate dehydrogenase (344 aa).

The substrate site is built by R93, R103, R131, and D215. Residues D215, D239, and D243 each coordinate Mg(2+). Residue G273–N285 participates in NAD(+) binding.

This sequence belongs to the isocitrate and isopropylmalate dehydrogenases family. LeuB type 1 subfamily. In terms of assembly, homodimer. It depends on Mg(2+) as a cofactor. Mn(2+) is required as a cofactor.

Its subcellular location is the cytoplasm. The catalysed reaction is (2R,3S)-3-isopropylmalate + NAD(+) = 4-methyl-2-oxopentanoate + CO2 + NADH. It functions in the pathway amino-acid biosynthesis; L-leucine biosynthesis; L-leucine from 3-methyl-2-oxobutanoate: step 3/4. Functionally, catalyzes the oxidation of 3-carboxy-2-hydroxy-4-methylpentanoate (3-isopropylmalate) to 3-carboxy-4-methyl-2-oxopentanoate. The product decarboxylates to 4-methyl-2 oxopentanoate. The polypeptide is 3-isopropylmalate dehydrogenase (Streptococcus mutans serotype c (strain ATCC 700610 / UA159)).